A 279-amino-acid polypeptide reads, in one-letter code: Oxygen-dependent coproporphyrinogen-III oxidase (279 aa).

Residue serine 102 participates in substrate binding. Histidine 106 and histidine 116 together coordinate a divalent metal cation. The active-site Proton donor is the histidine 116. Residue 118 to 120 participates in substrate binding; it reads NTR. A divalent metal cation-binding residues include histidine 149 and histidine 179. An important for dimerization region spans residues 244–279; that stretch reads YVEFNLLYDRGTKFGLMTDGNVEAILMSLPPEVKFN.

Belongs to the aerobic coproporphyrinogen-III oxidase family. In terms of assembly, homodimer. Requires a divalent metal cation as cofactor.

Its subcellular location is the cytoplasm. It carries out the reaction coproporphyrinogen III + O2 + 2 H(+) = protoporphyrinogen IX + 2 CO2 + 2 H2O. It functions in the pathway porphyrin-containing compound metabolism; protoporphyrin-IX biosynthesis; protoporphyrinogen-IX from coproporphyrinogen-III (O2 route): step 1/1. Involved in the heme biosynthesis. Catalyzes the aerobic oxidative decarboxylation of propionate groups of rings A and B of coproporphyrinogen-III to yield the vinyl groups in protoporphyrinogen-IX. The chain is Oxygen-dependent coproporphyrinogen-III oxidase from Rickettsia peacockii (strain Rustic).